A 274-amino-acid polypeptide reads, in one-letter code: MEIRERILADMQVAETIDAHEEIRKSVEFLKAYLKKNTFLKSFVLGISGGQDSTLTGKLAQMAISEMRAETGDDEYRFFAVSLPYGTQLDESDRQDALNFMEPDNRLTVNIKASVDASVAALAEAGVELSDFAKGNEKARERMKVQYAIAAMHKGVVVGTDHSAEAVTGFYTKYGDGGTDINPLFRLNKRQGKALLKELGCPEHLYLKKPTADLEDNKPALPDEVALGVTYDQIDDYLEGKEVPADAAAKIENWFIKTEHKRHMAITIFDDFWK.

Residue 46-53 (GISGGQDS) coordinates ATP. D52 contributes to the Mg(2+) binding site. Deamido-NAD(+) is bound at residue R140. T160 provides a ligand contact to ATP. E165 provides a ligand contact to Mg(2+). Positions 173 and 180 each coordinate deamido-NAD(+). The ATP site is built by K189 and T211. 260–261 (HK) contributes to the deamido-NAD(+) binding site.

This sequence belongs to the NAD synthetase family. In terms of assembly, homodimer.

It catalyses the reaction deamido-NAD(+) + NH4(+) + ATP = AMP + diphosphate + NAD(+) + H(+). The protein operates within cofactor biosynthesis; NAD(+) biosynthesis; NAD(+) from deamido-NAD(+) (ammonia route): step 1/1. In terms of biological role, catalyzes the ATP-dependent amidation of deamido-NAD to form NAD. Uses ammonia as a nitrogen source. This chain is NH(3)-dependent NAD(+) synthetase, found in Listeria monocytogenes serovar 1/2a (strain ATCC BAA-679 / EGD-e).